Reading from the N-terminus, the 352-residue chain is MTAALHIGHLSKSFQNTPVLNDISLSLDPGEILFIIGASGCGKTTLLRCLAGFEQPDSGEISLSGKTIFSKNTNLPVRETTFGLPRTGRCSVPHLTVYRNIAYGLGNGKGRTAQERQRIEAMLELTGISELAGRYPHELSGGQQQRVALARALAPDPELILLDEPFSALDEQLRRQIREDMIAALRANGKSAVFVSHDREEALQYADRIAVMKQGRILQTASPHELYRQPADLDAVLFIGEGIVFPAALNADGTADCRLGRLPVQSGAPAGTRGTLLIRPEQFSLHPHSAPVVSIHAVVLKTTPKARYTEISLRAGQTVLTLNLPSAPTLSDGISAVLHLDGPALFFPGNTL.

One can recognise an ABC transporter domain in the interval 5-239; the sequence is LHIGHLSKSF…PADLDAVLFI (235 aa). Residue 37–44 coordinates ATP; that stretch reads GASGCGKT.

Belongs to the ABC transporter superfamily. Fe(3+) ion importer (TC 3.A.1.10) family. As to quaternary structure, the complex is composed of two ATP-binding proteins (FbpC), two transmembrane proteins (FbpB) and a solute-binding protein (FbpA).

It localises to the cell inner membrane. It catalyses the reaction Fe(3+)(out) + ATP + H2O = Fe(3+)(in) + ADP + phosphate + H(+). Functionally, part of the ABC transporter complex FbpABC involved in Fe(3+) ions import. Responsible for energy coupling to the transport system. This is Fe(3+) ions import ATP-binding protein FbpC from Neisseria gonorrhoeae.